The following is a 925-amino-acid chain: Bifunctional glutamine synthetase adenylyltransferase/adenylyl-removing enzyme (925 aa).

Residues 1–426 (MTDASDLLSL…AQFDQVFADK (426 aa)) are adenylyl removase. The segment at 436-925 (DQAAGCIWSG…AALWARVFGA (490 aa)) is adenylyl transferase.

Belongs to the GlnE family. Requires Mg(2+) as cofactor.

It catalyses the reaction [glutamine synthetase]-O(4)-(5'-adenylyl)-L-tyrosine + phosphate = [glutamine synthetase]-L-tyrosine + ADP. The enzyme catalyses [glutamine synthetase]-L-tyrosine + ATP = [glutamine synthetase]-O(4)-(5'-adenylyl)-L-tyrosine + diphosphate. Involved in the regulation of glutamine synthetase GlnA, a key enzyme in the process to assimilate ammonia. When cellular nitrogen levels are high, the C-terminal adenylyl transferase (AT) inactivates GlnA by covalent transfer of an adenylyl group from ATP to specific tyrosine residue of GlnA, thus reducing its activity. Conversely, when nitrogen levels are low, the N-terminal adenylyl removase (AR) activates GlnA by removing the adenylyl group by phosphorolysis, increasing its activity. The regulatory region of GlnE binds the signal transduction protein PII (GlnB) which indicates the nitrogen status of the cell. This chain is Bifunctional glutamine synthetase adenylyltransferase/adenylyl-removing enzyme, found in Burkholderia mallei (strain ATCC 23344).